Consider the following 337-residue polypeptide: Ribosomal RNA small subunit methyltransferase H (337 aa).

Residues 45–47, D64, H91, D112, and Q119 each bind S-adenosyl-L-methionine; that span reads GGH.

The protein belongs to the methyltransferase superfamily. RsmH family.

It is found in the cytoplasm. The catalysed reaction is cytidine(1402) in 16S rRNA + S-adenosyl-L-methionine = N(4)-methylcytidine(1402) in 16S rRNA + S-adenosyl-L-homocysteine + H(+). Its function is as follows. Specifically methylates the N4 position of cytidine in position 1402 (C1402) of 16S rRNA. The sequence is that of Ribosomal RNA small subunit methyltransferase H from Cutibacterium acnes (strain DSM 16379 / KPA171202) (Propionibacterium acnes).